The sequence spans 401 residues: 3-oxoadipyl-CoA/3-oxo-5,6-dehydrosuberyl-CoA thiolase (401 aa).

Cys90 acts as the Acyl-thioester intermediate in catalysis. Catalysis depends on proton acceptor residues His357 and Cys387.

This sequence belongs to the thiolase-like superfamily. Thiolase family.

The enzyme catalyses succinyl-CoA + acetyl-CoA = 3-oxoadipyl-CoA + CoA. It catalyses the reaction 2,3-didehydroadipoyl-CoA + acetyl-CoA = 3-oxo-5,6-didehydrosuberyl-CoA + CoA. It functions in the pathway aromatic compound metabolism; phenylacetate degradation. Functionally, catalyzes the thiolytic cleavage of the beta-keto C8 intermediate 3-oxo-5,6-dehydrosuberyl-CoA with CoA to yield the C6 intermediate 2,3-dehydroadipyl-CoA and acetyl-CoA. Besides it catalyzes also the last step of the pathway, in which 3-oxoadipyl-CoA similarly is cleaved to acetyl-CoA and succinyl-CoA. The sequence is that of 3-oxoadipyl-CoA/3-oxo-5,6-dehydrosuberyl-CoA thiolase (paaJ) from Escherichia coli (strain K12).